The sequence spans 162 residues: Regulator of ribonuclease activity A (162 aa).

It belongs to the RraA family. In terms of assembly, homotrimer. Binds to both RNA-binding sites in the C-terminal region of Rne and to RhlB.

The protein resides in the cytoplasm. Globally modulates RNA abundance by binding to RNase E (Rne) and regulating its endonucleolytic activity. Can modulate Rne action in a substrate-dependent manner by altering the composition of the degradosome. Modulates RNA-binding and helicase activities of the degradosome. The chain is Regulator of ribonuclease activity A from Haemophilus influenzae (strain 86-028NP).